The sequence spans 192 residues: MKIFGTMYDKTMEWSKHRFAVFWLSFVSFIEAIFFPIPPDVMLIPMSMSKPKSAVKFAFYTAIASVIGGIIGYAIGFYATDWVENIVQQWGYAAHWAKAVSWFEQWGVLVVFVAGFSPIPYKVFTLCAGVMQMAFFPFVITAFVSRLARFLLVAKLAAWGGEKFAAKLRKSIEIIGWSVVVLAVIAYFILKN.

This is an uncharacterized protein from Haemophilus influenzae (strain ATCC 51907 / DSM 11121 / KW20 / Rd).